The following is a 34-amino-acid chain: Conotoxin S4.3 (34 aa).

Residue Gln-1 is modified to Pyrrolidone carboxylic acid. Residue Glu-3 is modified to 4-carboxyglutamate. Ser-7 carries an O-linked (HexNAc...) serine glycan. O-linked (HexNAc...) threonine glycosylation is present at Thr-9. 4 positions are modified to 4-hydroxyproline: Pro-17, Pro-22, Pro-31, and Pro-32.

Belongs to the conotoxin A superfamily. Contains 3 disulfide bonds. In terms of tissue distribution, expressed by the venom duct.

It is found in the secreted. Probable neurotoxin with ion channel inhibitor activity. This is Conotoxin S4.3 from Conus striatus (Striated cone).